A 325-amino-acid polypeptide reads, in one-letter code: Glycine--tRNA ligase alpha subunit (325 aa).

Belongs to the class-II aminoacyl-tRNA synthetase family. Tetramer of two alpha and two beta subunits.

The protein resides in the cytoplasm. The catalysed reaction is tRNA(Gly) + glycine + ATP = glycyl-tRNA(Gly) + AMP + diphosphate. The sequence is that of Glycine--tRNA ligase alpha subunit from Ralstonia nicotianae (strain ATCC BAA-1114 / GMI1000) (Ralstonia solanacearum).